We begin with the raw amino-acid sequence, 323 residues long: Mortality factor 4-like protein 1 (323 aa).

Residues 12-62 (QEGERVLCFHGPLLYEAKCVKVAIKDKQVKYFIHYSGWNKNWDEWVPESRV) enclose the Tudor-knot domain. Residues 77–143 (QKANQEQYAE…RKKRARVDPT (67 aa)) are disordered. The interval 94–227 (PGKKTSGLQQ…VAGIKEYFNV (134 aa)) is sufficient for interaction with SIN3A. Lys-104 carries the post-translational modification N6-acetyllysine. The tract at residues 125-191 (STSETPQPPR…FYLPAKKNVD (67 aa)) is interaction with RB1-1. The sufficient for interaction with PHF12 stretch occupies residues 149–303 (TFMNRVEVKV…FLKYLAKNSA (155 aa)). The MRG domain occupies 152 to 323 (NRVEVKVKIP…APPEYHRKAV (172 aa)). An interaction with RB1-2 region spans residues 284–305 (LALLLNYLHDFLKYLAKNSATL).

In terms of assembly, component of the NuA4 histone acetyltransferase complex which contains the catalytic subunit KAT5/TIP60 and the subunits EP400, TRRAP/PAF400, BRD8/SMAP, EPC1, DMAP1/DNMAP1, RUVBL1/TIP49, RUVBL2, ING3, actin, ACTL6A/BAF53A, MORF4L1/MRG15, MORF4L2/MRGX, MRGBP, YEATS4/GAS41, VPS72/YL1 and MEAF6. The NuA4 complex interacts with MYC and the adenovirus E1A protein. MORF4L1 may also participate in the formation of NuA4 related complexes which lack the KAT5/TIP60 catalytic subunit, but which include the SWI/SNF related protein SRCAP. Component of the mSin3A histone deacetylase complex, which includes SIN3A, HDAC2, ARID4B, MORF4L1, RBBP4/RbAp48, and RBBP7/RbAp46. May also interact with PHF12 and one or more as yet undefined members of the TLE (transducin-like enhancer of split) family of transcriptional repressors. Component of the SIN3B complex, which includes SIN3B, HDAC2 or HDAC1, PHF12 and MORF4L1. Interacts with RB1 and KAT8. Interacts with the N-terminus of MRFAP1. Found in a complex composed of MORF4L1, MRFAP1 and RB1. Interacts with the entire BRCA complex, which contains BRCA1, PALB2, BRCA2 and RAD51. Interacts with PALB2. Forms a complex with MSL1 and NUPR1.

The protein localises to the nucleus. Its function is as follows. Component of the NuA4 histone acetyltransferase (HAT) complex which is involved in transcriptional activation of select genes principally by acetylation of nucleosomal histones H4 and H2A. This modification may both alter nucleosome - DNA interactions and promote interaction of the modified histones with other proteins which positively regulate transcription. This complex may be required for the activation of transcriptional programs associated with oncogene and proto-oncogene mediated growth induction, tumor suppressor mediated growth arrest and replicative senescence, apoptosis, and DNA repair. The NuA4 complex ATPase and helicase activities seem to be, at least in part, contributed by the association of RUVBL1 and RUVBL2 with EP400. NuA4 may also play a direct role in DNA repair when directly recruited to sites of DNA damage. As part of the SIN3B complex represses transcription and counteracts the histone acetyltransferase activity of EP300 through the recognition H3K27ac marks by PHF12 and the activity of the histone deacetylase HDAC2. SIN3B complex is recruited downstream of the constitutively active genes transcriptional start sites through interaction with histones and mitigates histone acetylation and RNA polymerase II progression within transcribed regions contributing to the regulation of transcription. Required for homologous recombination repair (HRR) and resistance to mitomycin C (MMC). Involved in the localization of PALB2, BRCA2 and RAD51, but not BRCA1, to DNA-damage foci. The chain is Mortality factor 4-like protein 1 (Morf4l1) from Rattus norvegicus (Rat).